We begin with the raw amino-acid sequence, 227 residues long: Casparian strip membrane protein 2 (227 aa).

Residues 1–59 (MSSTSEATVIHMDGAAGKTPATAVPPPPPPAPTAPVQQQRKAGGVPFLLRSGAEGFRRC) lie on the Cytoplasmic side of the membrane. The tract at residues 17 to 37 (GKTPATAVPPPPPPAPTAPVQ) is disordered. Residues 23–33 (AVPPPPPPAPT) are compositionally biased toward pro residues. Residues 60–80 (MALLDLLLRVAAMGPTLAAAI) form a helical membrane-spanning segment. Residues 81–107 (STGTSDETLSVFTHYFQFRARFDDFSA) lie on the Extracellular side of the membrane. The chain crosses the membrane as a helical span at residues 108–128 (FTFFMVANAVAAGYLLMSLPF). The Cytoplasmic portion of the chain corresponds to 129-149 (SAFGVIRPKATSVRLLLLICD). The chain crosses the membrane as a helical span at residues 150–170 (TIMVVLVTAAASAAAAIVYVA). At 171–197 (HEGNRRANWVPICMQFHGFCKRTSGAV) the chain is on the extracellular side. A helical membrane pass occupies residues 198 to 218 (VASFLAVLIFILLVFLGACAI). Residues 219–227 (RRRHTTTKH) lie on the Cytoplasmic side of the membrane.

Belongs to the Casparian strip membrane proteins (CASP) family. In terms of assembly, homodimer and heterodimers.

It is found in the cell membrane. Functionally, regulates membrane-cell wall junctions and localized cell wall deposition. Required for establishment of the Casparian strip membrane domain (CSD) and the subsequent formation of Casparian strips, a cell wall modification of the root endodermis that determines an apoplastic barrier between the intraorganismal apoplasm and the extraorganismal apoplasm and prevents lateral diffusion. The sequence is that of Casparian strip membrane protein 2 from Brachypodium distachyon (Purple false brome).